The sequence spans 1531 residues: Nuclear factor of activated T-cells 5 (1531 aa).

2 disordered regions span residues 34–89 (ELQL…TSSS) and 114–141 (VSNR…RHTV). The segment covering 41–51 (RETSVASMSQT) has biased composition (polar residues). Over residues 63–89 (VVAADASSAPSSSSMGGACSSFTTSSS) the composition is skewed to low complexity. Phosphoserine is present on Ser-120. An N6-acetyllysine modification is found at Lys-122. Polar residues predominate over residues 122–134 (KQLTSNTVQQHPS). At Ser-134 the chain carries Phosphoserine. Thr-135 is modified (phosphothreonine; by CDK5). Phosphoserine is present on Ser-155. 2 disordered regions span residues 175-220 (WMED…CEES) and 241-265 (TTDN…GVKK). The span at 179 to 192 (SPSNFSNMSTSSYN) shows a compositional bias: low complexity. Residues 200 to 212 (KSRKRNPKQRPGV) are compositionally biased toward basic residues. The span at 241–260 (TTDNKGNSKAGNGTLENQKG) shows a compositional bias: polar residues. The RHD domain maps to 264–443 (KKSPMLCGQY…SPILCTQPAG (180 aa)). A DNA-binding region spans residues 293–300 (RARYLTEG). Lys-556 is covalently cross-linked (Glycyl lysine isopeptide (Lys-Gly) (interchain with G-Cter in SUMO1); alternate). Lys-556 participates in a covalent cross-link: Glycyl lysine isopeptide (Lys-Gly) (interchain with G-Cter in SUMO2); alternate. Ser-561 carries the phosphoserine modification. Residues Lys-573 and Lys-603 each participate in a glycyl lysine isopeptide (Lys-Gly) (interchain with G-Cter in SUMO2) cross-link. Disordered stretches follow at residues 640-666 (NIAG…QQIQ), 841-891 (VSPG…QVME), 958-996 (PPAV…TGTQ), 1211-1304 (PQVA…QEQQ), 1316-1371 (APMN…QEQQ), and 1473-1502 (ISQP…SPLA). A compositionally biased stretch (low complexity) spans 646–656 (SFSSPSSSHLP). Composition is skewed to polar residues over residues 841 to 852 (VSPGMFSSTEPT) and 869 to 878 (HPQSENTLSN). Low complexity-rich tracts occupy residues 879–888 (QQQQQQQQQQ) and 960–980 (AVSG…PGTT). 2 stretches are compositionally biased toward polar residues: residues 981–996 (MFQT…TGTQ) and 1224–1247 (PQSQ…NSPS). The span at 1248–1266 (QEQQQQQQQQQQQQQQQQQ) shows a compositional bias: low complexity. 2 stretches are compositionally biased toward polar residues: residues 1267-1278 (SILFSNQNTMAT) and 1291-1304 (FNPN…QEQQ). A compositionally biased stretch (low complexity) spans 1320–1330 (QEQQPMQFQSQ). The span at 1331-1371 (STVSSLQNPGPTQSESSQTPLFHSSPQIQLVQGSPSSQEQQ) shows a compositional bias: polar residues. Low complexity predominate over residues 1475–1486 (QPGQPQNEGQPP). Positions 1487 to 1502 (VTTLLSQQMPENSPLA) are enriched in polar residues.

As to quaternary structure, homodimer when bound to DNA, completely encircles its DNA target. Interacts with CIDEC; this interaction is direct and retains NFAT5 in the cytoplasm. Does not bind with Fos and Jun transcription factors. Interacts with DDX5 and DDX17; this interaction leads to DDX5/DDX17 recruitment to LNC2 and S100A4 promoters and NFAT5-mediated DDX5/DDX17-enhanced transactivation. Phosphorylated. Phosphorylated at Thr-135 by CDK5 in response to osmotic stress; this phosphorylation mediates its rapid nuclear localization. Post-translationally, poly-ADP-ribosylated by PARP1 in response to DNA damage, promoting recruitment to sites of R-loop-associated DNA damage. As to expression, widely expressed, with highest levels in skeletal muscle, brain, heart and peripheral blood leukocytes.

It is found in the nucleus. It localises to the cytoplasm. Its subcellular location is the chromosome. Its function is as follows. Transcription factor involved, among others, in the transcriptional regulation of osmoprotective and inflammatory genes. Binds the DNA consensus sequence 5'-[ACT][AG]TGGAAA[CAT]A[TA][ATC][CA][ATG][GT][GAC][CG][CT]-3'. Mediates the transcriptional response to hypertonicity. Positively regulates the transcription of LCN2 and S100A4 genes; optimal transactivation of these genes requires the presence of DDX5/DDX17. Also involved in the DNA damage response by preventing formation of R-loops; R-loops are composed of a DNA:RNA hybrid and the associated non-template single-stranded DNA. The sequence is that of Nuclear factor of activated T-cells 5 from Homo sapiens (Human).